The chain runs to 380 residues: Alkaline protease (380 aa).

A signal peptide spans 1–27 (MKKPLGKIVASTALLISVAFSSSIASA). Residues 28 to 111 (AEEAKEKYLI…IEEDAEVTTM (84 aa)) constitute a propeptide that is removed on maturation. One can recognise an Inhibitor I9 domain in the interval 34 to 111 (KYLIGFNEQE…IEEDAEVTTM (78 aa)). Gln-113 provides a ligand contact to Ca(2+). A Peptidase S8 domain is found at 116–379 (PWGISRVQAP…SGLVNAEAAT (264 aa)). Residue Asp-143 is the Charge relay system of the active site. A Ca(2+)-binding site is contributed by Asp-151. His-173 (charge relay system) is an active-site residue. 7 residues coordinate Ca(2+): Leu-184, Asn-186, Ile-188, Val-190, Ala-274, Tyr-276, and Ala-279. Residue Ser-326 is the Charge relay system of the active site.

It belongs to the peptidase S8 family. The cofactor is Ca(2+).

The protein resides in the secreted. This chain is Alkaline protease, found in Shouchella clausii (Alkalihalobacillus clausii).